Here is a 161-residue protein sequence, read N- to C-terminus: Nucleotide-binding protein Shewmr4_3156 (161 aa).

Belongs to the YajQ family.

Its function is as follows. Nucleotide-binding protein. This chain is Nucleotide-binding protein Shewmr4_3156, found in Shewanella sp. (strain MR-4).